Here is a 456-residue protein sequence, read N- to C-terminus: Chromosomal replication initiator protein DnaA (456 aa).

The domain I, interacts with DnaA modulators stretch occupies residues 1-73; that stretch reads MEIYLDNLWD…ADVVHDILGY (73 aa). The tract at residues 73–117 is domain II; the sequence is YPVEIYLTTFLVEDSRKNDSGLIWSEHKSVNILGENLSIPKPLPA. A domain III, AAA+ region region spans residues 118–334; it reads NLNAKYMFSR…GALTRVVTYI (217 aa). The ATP site is built by Gly-162, Gly-164, Lys-165, and Thr-166. The domain IV, binds dsDNA stretch occupies residues 335 to 456; the sequence is SISGLPMTVE…SDRINFSSRH (122 aa).

Belongs to the DnaA family. Oligomerizes as a right-handed, spiral filament on DNA at oriC.

It localises to the cytoplasm. In terms of biological role, plays an essential role in the initiation and regulation of chromosomal replication. ATP-DnaA binds to the origin of replication (oriC) to initiate formation of the DNA replication initiation complex once per cell cycle. Binds the DnaA box (a 9 base pair repeat at the origin) and separates the double-stranded (ds)DNA. Forms a right-handed helical filament on oriC DNA; dsDNA binds to the exterior of the filament while single-stranded (ss)DNA is stabiized in the filament's interior. The ATP-DnaA-oriC complex binds and stabilizes one strand of the AT-rich DNA unwinding element (DUE), permitting loading of DNA polymerase. After initiation quickly degrades to an ADP-DnaA complex that is not apt for DNA replication. Binds acidic phospholipids. The protein is Chromosomal replication initiator protein DnaA of Trichodesmium erythraeum (strain IMS101).